The primary structure comprises 1150 residues: Protogenin (1150 aa).

The N-terminal stretch at 1–35 is a signal peptide; it reads MAPPLRPLARLRPPGMLLRALLLLLLLSPLPGVWC. 4 consecutive Ig-like domains span residues 36 to 130, 135 to 222, 235 to 322, and 327 to 411; these read FSEL…AHLA, SAFE…ASLT, PTII…ATLT, and PSFV…ARLT. The Extracellular segment spans residues 36–949; it reads FSELSFVKEP…YYHLDQKSMT (914 aa). Cystine bridges form between C60/C113, C156/C205, C256/C304, and C348/C395. N-linked (GlcNAc...) asparagine glycosylation occurs at N90. Fibronectin type-III domains lie at 421 to 515, 517 to 613, 618 to 717, 724 to 817, and 822 to 917; these read APYN…TLED, PLRP…TPKA, APKS…VRDR, PPHH…TLPE, and PPVG…VLPK. The N-linked (GlcNAc...) asparagine glycan is linked to N488. N630 carries an N-linked (GlcNAc...) asparagine glycan. A helical membrane pass occupies residues 950 to 970; sequence GIAVGVGIALTCILICVLILI. Residues 971–1150 are Cytoplasmic-facing; sequence YRSKARKSSA…SVISTTPPNL (180 aa). 2 disordered regions span residues 981–1002 and 1086–1150; these read SKTAQNGTQQLPRTSASLASGN and ISDE…PPNL. 2 stretches are compositionally biased toward polar residues: residues 983–1000 and 1092–1102; these read TAQNGTQQLPRTSASLAS and PSSPGQTTSFS. Basic and acidic residues predominate over residues 1110–1138; sequence DTEHSANSEGSHETGDSGRFSHESNDEIH. Residues 1141–1150 show a composition bias toward polar residues; the sequence is SVISTTPPNL.

The protein belongs to the immunoglobulin superfamily. DCC family.

The protein resides in the membrane. Its function is as follows. May play a role in anteroposterior axis elongation. In Homo sapiens (Human), this protein is Protogenin.